A 62-amino-acid polypeptide reads, in one-letter code: Alkaline proteinase (62 aa).

The Peptidase S8 domain maps to 1 to 62 (GSTSYIYDTS…FAPGTSVLSS (62 aa)). The active-site Charge relay system is the Asp21.

It is found in the secreted. With respect to regulation, inhibited by phenylmethanesulfonyl fluoride (PMSF) and chymostatin (CST), but not by Bowman-Birk type trypsin-chymotrypsin inhibitor (BBI). In terms of biological role, serine protease. May be involved in the invasion of grains and hydrolysis of grain proteins. The protein is Alkaline proteinase of Fusarium culmorum.